We begin with the raw amino-acid sequence, 29 residues long: Trypsin inhibitor 3 (29 aa).

3 cysteine pairs are disulfide-bonded: cysteine 3–cysteine 20, cysteine 10–cysteine 22, and cysteine 16–cysteine 28.

This sequence belongs to the protease inhibitor I7 (squash-type serine protease inhibitor) family.

It is found in the secreted. Inhibits trypsin. The protein is Trypsin inhibitor 3 of Luffa aegyptiaca (Sponge gourd).